Reading from the N-terminus, the 489-residue chain is Carboxyl-terminal-processing peptidase 1, chloroplastic (489 aa).

A compositionally biased stretch (low complexity) spans 1–20 (MRLLLPFSSPLSATSSPSTP). The disordered stretch occupies residues 1-27 (MRLLLPFSSPLSATSSPSTPQFIPELP). Positions 189 to 273 (FSRMSKYDIT…TFVVLKVKHG (85 aa)) constitute a PDZ domain. Active-site charge relay system residues include serine 403 and lysine 428.

It belongs to the peptidase S41A family.

It is found in the plastid. The protein localises to the chloroplast thylakoid lumen. It carries out the reaction The enzyme shows specific recognition of a C-terminal tripeptide, Xaa-Yaa-Zaa, in which Xaa is preferably Ala or Leu, Yaa is preferably Ala or Tyr, and Zaa is preferably Ala, but then cleaves at a variable distance from the C-terminus. A typical cleavage is -Ala-Ala-|-Arg-Ala-Ala-Lys-Glu-Asn-Tyr-Ala-Leu-Ala-Ala.. Protease involved in the C-terminal processing of the chloroplastic D1 protein of photosystem II. This proteolytic processing is necessary to allow the light-driven assembly of the tetranuclear manganese cluster, which is responsible for photosynthetic water oxidation. The chain is Carboxyl-terminal-processing peptidase 1, chloroplastic (CTPA1) from Arabidopsis thaliana (Mouse-ear cress).